The chain runs to 103 residues: High-potential iron-sulfur protein (103 aa).

A signal peptide spans 1-28 (MSNRRLFLKSIPIMAAAGAVGMAGLARA). The [4Fe-4S] cluster site is built by C66, C69, C82, and C96.

Belongs to the high-potential iron-sulfur protein (HiPIP) family. Homodimer.

Its subcellular location is the periplasm. Functionally, specific class of high-redox-potential 4Fe-4S ferredoxins. Functions in anaerobic electron transport in most purple and in some other photosynthetic bacteria and in at least one genus (Paracoccus) of halophilic, denitrifying bacteria. In Ralstonia nicotianae (strain ATCC BAA-1114 / GMI1000) (Ralstonia solanacearum), this protein is High-potential iron-sulfur protein (hip).